The following is a 201-amino-acid chain: MSKVLVLKSSILAGYSQSNQLSDYFVEQWREKHSADEITVRDLATNPIPVLDGELVGALRPSDAPLTPRQQEALALSDELIAELKAHDVIVIAAPMYNFNISTQLKNYFDLVARAGVTFRYTEKGPEGLVTGKKAIVITSRGGIHKDGPTDLVTPYLSTFLGFIGITDVKFVFAEGIAYGPEMAAKAQSDAKAAIDSIVAE.

FMN is bound by residues Ser-10, 16–18 (SQS), 96–99 (MYNF), and 140–143 (SRGG).

Belongs to the azoreductase type 1 family. As to quaternary structure, homodimer. Requires FMN as cofactor.

It carries out the reaction 2 a quinone + NADH + H(+) = 2 a 1,4-benzosemiquinone + NAD(+). It catalyses the reaction N,N-dimethyl-1,4-phenylenediamine + anthranilate + 2 NAD(+) = 2-(4-dimethylaminophenyl)diazenylbenzoate + 2 NADH + 2 H(+). Quinone reductase that provides resistance to thiol-specific stress caused by electrophilic quinones. Functionally, also exhibits azoreductase activity. Catalyzes the reductive cleavage of the azo bond in aromatic azo compounds to the corresponding amines. This is FMN-dependent NADH:quinone oxidoreductase from Escherichia coli O6:H1 (strain CFT073 / ATCC 700928 / UPEC).